We begin with the raw amino-acid sequence, 83 residues long: Gas vesicle protein G1 (83 aa).

It belongs to the gas vesicle GvpG family. GvpF to GvpM interact with each other in vitro, and may form multi-subunit complex(es). Might interact with GvpA1.

The protein resides in the gas vesicle. Proteins GvpF to GvpM might be involved in nucleating gas vesicle formation. A minor component of the gas vesicle. Gas vesicles are hollow, gas filled proteinaceous nanostructures found in several microbial planktonic microorganisms. They allow positioning of halobacteria at the optimal depth for growth in the poorly aerated, shallow brine pools of their habitat. Its function is as follows. Expression of a 9.5 kb p-vac DNA fragment containing 2 divergently transcribed regions (gvpD-gvpE-gvpF-gvpG-gvpH-gvpI-gvpJ-gvpK-gvpL-gvpM and gvpA-gvpC-gvpN-gvpO) allows H.volcanii to produce gas vesicles. A minimal gas vesicle can be made in H.volcanii by gvpA1-gvpO1 plus gvpF1-gvpG1-gvpJ1-gvpK1-gvpL1-gvpM1; lack of enough GvpJ1 prevents formation. A similar region restores gas vesicle production in H.halobium without the p-vac locus, but it still has the c-vac locus. This Halobacterium salinarum (strain ATCC 700922 / JCM 11081 / NRC-1) (Halobacterium halobium) protein is Gas vesicle protein G1 (gvpG11).